The primary structure comprises 87 residues: UPF0729 protein C18orf32 homolog (87 aa).

The protein belongs to the UPF0729 family.

This Esox lucius (Northern pike) protein is UPF0729 protein C18orf32 homolog.